We begin with the raw amino-acid sequence, 434 residues long: Methylenetetrahydrofolate--tRNA-(uracil-5-)-methyltransferase TrmFO (434 aa).

Position 9–14 (Gly-9–Gly-14) interacts with FAD.

The protein belongs to the MnmG family. TrmFO subfamily. It depends on FAD as a cofactor.

The protein resides in the cytoplasm. It carries out the reaction uridine(54) in tRNA + (6R)-5,10-methylene-5,6,7,8-tetrahydrofolate + NADH + H(+) = 5-methyluridine(54) in tRNA + (6S)-5,6,7,8-tetrahydrofolate + NAD(+). The enzyme catalyses uridine(54) in tRNA + (6R)-5,10-methylene-5,6,7,8-tetrahydrofolate + NADPH + H(+) = 5-methyluridine(54) in tRNA + (6S)-5,6,7,8-tetrahydrofolate + NADP(+). In terms of biological role, catalyzes the folate-dependent formation of 5-methyl-uridine at position 54 (M-5-U54) in all tRNAs. The chain is Methylenetetrahydrofolate--tRNA-(uracil-5-)-methyltransferase TrmFO from Bacillus licheniformis (strain ATCC 14580 / DSM 13 / JCM 2505 / CCUG 7422 / NBRC 12200 / NCIMB 9375 / NCTC 10341 / NRRL NRS-1264 / Gibson 46).